The sequence spans 302 residues: HTH-type transcriptional regulator GbpR (302 aa).

The HTH lysR-type domain occupies 1 to 56 (MSHLRMLVMIEEHGQVSAAAAAMNMTQPAASRMLSEMEAIVKSPLCQRASRGVVLT). The segment at residues 16 to 35 (VSAAAAAMNMTQPAASRMLS) is a DNA-binding region (H-T-H motif).

It belongs to the LysR transcriptional regulatory family.

Its function is as follows. Activator of the expression of chvE when bound to its inducer and represses its expression in the absence of inducer (L-arabinose, D-fucose or D-galactose). Negatively regulates its own expression. The sequence is that of HTH-type transcriptional regulator GbpR (gbpR) from Rhizobium radiobacter (Agrobacterium tumefaciens).